A 292-amino-acid polypeptide reads, in one-letter code: Putative sugar lactone lactonase YvrE (292 aa).

Glu-15, Asn-146, and Asp-196 together coordinate a divalent metal cation.

The protein belongs to the SMP-30/CGR1 family. The cofactor is a divalent metal cation.

The protein localises to the cytoplasm. The sequence is that of Putative sugar lactone lactonase YvrE (yvrE) from Bacillus subtilis (strain 168).